Reading from the N-terminus, the 204-residue chain is dITP/XTP pyrophosphatase (204 aa).

14–19 contacts substrate; it reads THNKGK. Mg(2+)-binding residues include E46 and D75. The active-site Proton acceptor is the D75. Residues S76, 161–164, K184, and 189–190 contribute to the substrate site; these read FGYD and HR.

This sequence belongs to the HAM1 NTPase family. As to quaternary structure, homodimer. Mg(2+) is required as a cofactor.

The enzyme catalyses XTP + H2O = XMP + diphosphate + H(+). It catalyses the reaction dITP + H2O = dIMP + diphosphate + H(+). It carries out the reaction ITP + H2O = IMP + diphosphate + H(+). Pyrophosphatase that catalyzes the hydrolysis of nucleoside triphosphates to their monophosphate derivatives, with a high preference for the non-canonical purine nucleotides XTP (xanthosine triphosphate), dITP (deoxyinosine triphosphate) and ITP. Seems to function as a house-cleaning enzyme that removes non-canonical purine nucleotides from the nucleotide pool, thus preventing their incorporation into DNA/RNA and avoiding chromosomal lesions. In Ruegeria pomeroyi (strain ATCC 700808 / DSM 15171 / DSS-3) (Silicibacter pomeroyi), this protein is dITP/XTP pyrophosphatase.